The sequence spans 312 residues: Very long chain fatty acid elongase 4 (312 aa).

N-linked (GlcNAc...) asparagine glycosylation occurs at N20. Helical transmembrane passes span 42-62, 78-98, 127-147, 165-185, 188-208, 217-237, and 246-266; these read LMQSPWPTISISTLYLLFVWL, VLIIYNFGMVLLNLFIFRELF, ALWWYFVSKGVEYLDTVFFIL, MFTLWWIGIKWVAGGQAFFGA, NSFIHVIMYSYYGLTAFGPWI, YLTMLQLVQFHVTIGHTALSL, and WMHWALIAYAISFIFLFLNFY. A compositionally biased stretch (polar residues) spans 273 to 292; the sequence is PKQSKTGKTATNGISSNGVN. A disordered region spans residues 273–312; sequence PKQSKTGKTATNGISSNGVNKSEKALENGKPQKNGKPKGE. Residue N292 is glycosylated (N-linked (GlcNAc...) asparagine). The short motif at 308–312 is the Di-lysine motif element; that stretch reads KPKGE.

Belongs to the ELO family. ELOVL4 subfamily. Oligomer. In terms of processing, N-glycosylated. As to expression, expressed in the retina, exclusively in photoreceptor cells and in the brain, skin, testis and lens.

It is found in the endoplasmic reticulum membrane. It carries out the reaction a very-long-chain acyl-CoA + malonyl-CoA + H(+) = a very-long-chain 3-oxoacyl-CoA + CO2 + CoA. The enzyme catalyses hexacosanoyl-CoA + malonyl-CoA + H(+) = 3-oxooctacosanyol-CoA + CO2 + CoA. It catalyses the reaction octacosanoyl-CoA + malonyl-CoA + H(+) = 3-oxo-triacontanoyl-CoA + CO2 + CoA. The catalysed reaction is triacontanoyl-CoA + malonyl-CoA + H(+) = 3-oxo-dotriacontanoyl-CoA + CO2 + CoA. It carries out the reaction (19Z,22Z,25Z,28Z,31Z)-tetratriacontapentaenoyl-CoA + malonyl-CoA + H(+) = 3-oxo-(21Z,24Z,27Z,30Z,33Z)-hexatriacontapentaenoyl-CoA + CO2 + CoA. The enzyme catalyses (4Z,7Z,10Z,13Z,16Z,19Z)-docosahexaenoyl-CoA + malonyl-CoA + H(+) = 3-oxo-(6Z,9Z,12Z,15Z,18Z,21Z)-tetracosahexaenoyl-CoA + CO2 + CoA. It catalyses the reaction (7Z,10Z,13Z,16Z)-docosatetraenoyl-CoA + malonyl-CoA + H(+) = (9Z,12Z,15Z,18Z)-3-oxotetracosatetraenoyl-CoA + CO2 + CoA. The catalysed reaction is (11Z,14Z,17Z,20Z,23Z)-hexacosapentaenoyl-CoA + malonyl-CoA + H(+) = 3-oxo-(13Z,16Z,19Z,22Z,25Z)-octacosapentaenoyl-CoA + CO2 + CoA. It carries out the reaction (13Z,16Z,19Z,22Z,25Z)-octacosapentaenoyl-CoA + malonyl-CoA + H(+) = 3-oxo-(15Z,18Z,21Z,24Z,27Z)-triacontapentaenoyl-CoA + CO2 + CoA. The enzyme catalyses (15Z,18Z,21Z,24Z,27Z)-triacontapentaenoyl-CoA + malonyl-CoA + H(+) = 3-oxo-(17Z,20Z,23Z,26Z,29Z)-dotriacontapentaenoyl-CoA + CO2 + CoA. It catalyses the reaction (17Z,20Z,23Z,26Z,29Z)-dotriacontapentaenoyl-CoA + malonyl-CoA + H(+) = 3-oxo-(19Z,22Z,25Z,28Z,31Z)-tetratriacontapentaenoyl-CoA + CO2 + CoA. The catalysed reaction is (21Z,24Z,27Z,30Z,33Z)-hexatriacontapentaenoyl-CoA + malonyl-CoA + H(+) = 3-oxo-(23Z,26Z,29Z,32Z,35Z)-octatriacontapentaenoyl-CoA + CO2 + CoA. It carries out the reaction (11Z,14Z,17Z,20Z)-hexacosatetraenoyl-CoA + malonyl-CoA + H(+) = (13Z,16Z,19Z,22Z)-3-oxooctacosatetraenoyl-CoA + CO2 + CoA. The enzyme catalyses (13Z,16Z,19Z,22Z)-octacosatetraenoyl-CoA + malonyl-CoA + H(+) = 3-oxo-(15Z,18Z,21Z,24Z)-triacontatetraenoyl-CoA + CO2 + CoA. It catalyses the reaction (15Z,18Z,21Z,24Z)-triacontatetraenoyl-CoA + malonyl-CoA + H(+) = 3-oxo-(17Z,20Z,23Z,26Z)-dotriacontatetraenoyl-CoA + CO2 + CoA. The catalysed reaction is (17Z,20Z,23Z,26Z)-dotriacontatetraenoyl-CoA + malonyl-CoA + H(+) = 3-oxo-(19Z,22Z,25Z,28Z)-tetratriacontatetraenoyl-CoA + CO2 + CoA. It carries out the reaction (19Z,22Z,25Z,28Z)-tetratriacontatetraenoyl-CoA + malonyl-CoA + H(+) = 3-oxo-(21Z,24Z,27Z,30Z)-hexatriacontatetraenoyl-CoA + CO2 + CoA. The enzyme catalyses (21Z,24Z,27Z,30Z)-hexatriacontatetraenoyl-CoA + malonyl-CoA + H(+) = 3-oxo-(23Z,26Z,29Z,32Z)-octatriacontatetraenoyl-CoA + CO2 + CoA. It catalyses the reaction (6Z,9Z,12Z,15Z,18Z,21Z)-tetracosahexaenoyl-CoA + malonyl-CoA + H(+) = 3-oxo-(8Z,11Z,14Z,17Z,20Z,23Z)-hexacosahexaenoyl-CoA + CO2 + CoA. The catalysed reaction is (8Z,11Z,14Z,17Z,20Z,23Z)-hexacosahexaenoyl-CoA + malonyl-CoA + H(+) = 3-oxo-(10Z,13Z,16Z,19Z,22Z,25Z)-octacosahexaenoyl-CoA + CO2 + CoA. It carries out the reaction (10Z,13Z,16Z,19Z,22Z,25Z)-octacosahexaenoyl-CoA + malonyl-CoA + H(+) = 3-oxo-(12Z,15Z,18Z,21Z,24Z,27Z)-triacontahexaenoyl-CoA + CO2 + CoA. The enzyme catalyses (12Z,15Z,18Z,21Z,24Z,27Z)-triacontahexaenoyl-CoA + malonyl-CoA + H(+) = 3-oxo-(14Z,17Z,20Z,23Z,26Z,29Z)-dotriacontahexaenoyl-CoA + CO2 + CoA. It catalyses the reaction (14Z,17Z,20Z,23Z,26Z,29Z)-dotriacontahexaenoyl-CoA + malonyl-CoA + H(+) = 3-oxo-(16Z,19Z,22Z,25Z,28Z,31Z)-tetratriacontahexaenoyl-CoA + CO2 + CoA. The catalysed reaction is (16Z,19Z,22Z,25Z,28Z,31Z)-tetratriacontahexaenoyl-CoA + malonyl-CoA + H(+) = 3-oxo-(18Z,21Z,24Z,27Z,30Z,33Z)-hexatriacontahexaenoyl-CoA + CO2 + CoA. It carries out the reaction (9Z,12Z,15Z,18Z,21Z)-tetracosapentaenoyl-CoA + malonyl-CoA + H(+) = 3-oxo-(11Z,14Z,17Z,20Z,23Z)-hexacosapentaenoyl-CoA + CO2 + CoA. It participates in lipid metabolism; fatty acid biosynthesis. Its function is as follows. Catalyzes the first and rate-limiting reaction of the four reactions that constitute the long-chain fatty acids elongation cycle. This endoplasmic reticulum-bound enzymatic process allows the addition of 2 carbons to the chain of long- and very long-chain fatty acids (VLCFAs) per cycle. Condensing enzyme that catalyzes the synthesis of very long chain saturated (VLC-SFA) and polyunsaturated (PUFA) fatty acids that are involved in multiple biological processes as precursors of membrane lipids and lipid mediators. May play a critical role in early brain and skin development. The sequence is that of Very long chain fatty acid elongase 4 from Mus musculus (Mouse).